The sequence spans 84 residues: UPF0729 protein F18A11.3 (84 aa).

Residues 1–21 traverse the membrane as a helical segment; sequence MVCLPCIFLPIMMAIYMKFIM.

This sequence belongs to the UPF0729 family.

Its subcellular location is the cell membrane. The chain is UPF0729 protein F18A11.3 from Caenorhabditis elegans.